The primary structure comprises 122 residues: Large ribosomal subunit protein uL18 (122 aa).

The segment at 1–25 (MSTLSRKQQTQKRHRRLRRHLSGTA) is disordered. A compositionally biased stretch (basic residues) spans 9–21 (QTQKRHRRLRRHL).

The protein belongs to the universal ribosomal protein uL18 family. In terms of assembly, part of the 50S ribosomal subunit; part of the 5S rRNA/L5/L18/L25 subcomplex. Contacts the 5S and 23S rRNAs.

Its function is as follows. This is one of the proteins that bind and probably mediate the attachment of the 5S RNA into the large ribosomal subunit, where it forms part of the central protuberance. The polypeptide is Large ribosomal subunit protein uL18 (Synechococcus sp. (strain CC9311)).